Reading from the N-terminus, the 339-residue chain is Phosphoribosylformylglycinamidine cyclo-ligase (339 aa).

Belongs to the AIR synthase family.

Its subcellular location is the cytoplasm. The catalysed reaction is 2-formamido-N(1)-(5-O-phospho-beta-D-ribosyl)acetamidine + ATP = 5-amino-1-(5-phospho-beta-D-ribosyl)imidazole + ADP + phosphate + H(+). Its pathway is purine metabolism; IMP biosynthesis via de novo pathway; 5-amino-1-(5-phospho-D-ribosyl)imidazole from N(2)-formyl-N(1)-(5-phospho-D-ribosyl)glycinamide: step 2/2. The protein is Phosphoribosylformylglycinamidine cyclo-ligase of Streptococcus thermophilus (strain ATCC BAA-491 / LMD-9).